The chain runs to 273 residues: MSSPRHVFYISDRTGLTAENIGEALLNQFGNLSFKRHTHPFVDTPEKARAVVEKVNRSRQENGQRPIAFVSVVDDEIRRIIKGADAFQINFFETFLGLLEKELNTEATASGQGHHSIGNTKRYDARMEAVNFSLNHDDGVSDKNLQEADVILMGVSRSGKTPTCLYLALQYGIRAANYPLIPDDLESADLPRMVKPYRDKLFGLTIQPERLQAIRQERRPNSTYAKIDTCRSEVADAQSMFRRHGIPFANTTDKSVEELAVHILQACKLKRRF.

Position 154–161 (154–161 (GVSRSGKT)) interacts with ADP.

Belongs to the pyruvate, phosphate/water dikinase regulatory protein family. PSRP subfamily.

The enzyme catalyses [pyruvate, water dikinase] + ADP = [pyruvate, water dikinase]-phosphate + AMP + H(+). It carries out the reaction [pyruvate, water dikinase]-phosphate + phosphate + H(+) = [pyruvate, water dikinase] + diphosphate. Its function is as follows. Bifunctional serine/threonine kinase and phosphorylase involved in the regulation of the phosphoenolpyruvate synthase (PEPS) by catalyzing its phosphorylation/dephosphorylation. This is Putative phosphoenolpyruvate synthase regulatory protein from Neisseria meningitidis serogroup B (strain ATCC BAA-335 / MC58).